The primary structure comprises 468 residues: Dimethylamine methyltransferase MtbB2 (468 aa).

Position 356 (pyrrolysine 356) is a non-standard amino acid, pyrrolysine.

Belongs to the dimethylamine methyltransferase family.

It carries out the reaction Co(I)-[dimethylamine-specific corrinoid protein] + dimethylamine + H(+) = methyl-Co(III)-[dimethylamine-specific corrinoid protein] + methylamine. The protein operates within one-carbon metabolism; methanogenesis from dimethylamine. Functionally, catalyzes the transfer of a methyl group from dimethylamine to the corrinoid cofactor of MtbC. In Methanosarcina acetivorans (strain ATCC 35395 / DSM 2834 / JCM 12185 / C2A), this protein is Dimethylamine methyltransferase MtbB2 (mtbB2).